Here is a 327-residue protein sequence, read N- to C-terminus: Methionyl-tRNA formyltransferase (327 aa).

122-125 (SLLP) lines the (6S)-5,6,7,8-tetrahydrofolate pocket.

This sequence belongs to the Fmt family.

It carries out the reaction L-methionyl-tRNA(fMet) + (6R)-10-formyltetrahydrofolate = N-formyl-L-methionyl-tRNA(fMet) + (6S)-5,6,7,8-tetrahydrofolate + H(+). Its function is as follows. Attaches a formyl group to the free amino group of methionyl-tRNA(fMet). The formyl group appears to play a dual role in the initiator identity of N-formylmethionyl-tRNA by promoting its recognition by IF2 and preventing the misappropriation of this tRNA by the elongation apparatus. This is Methionyl-tRNA formyltransferase from Ralstonia pickettii (strain 12J).